The chain runs to 293 residues: ATP synthase gamma chain (293 aa).

It belongs to the ATPase gamma chain family. In terms of assembly, F-type ATPases have 2 components, CF(1) - the catalytic core - and CF(0) - the membrane proton channel. CF(1) has five subunits: alpha(3), beta(3), gamma(1), delta(1), epsilon(1). CF(0) has three main subunits: a, b and c.

The protein localises to the cell inner membrane. Functionally, produces ATP from ADP in the presence of a proton gradient across the membrane. The gamma chain is believed to be important in regulating ATPase activity and the flow of protons through the CF(0) complex. The sequence is that of ATP synthase gamma chain from Beijerinckia indica subsp. indica (strain ATCC 9039 / DSM 1715 / NCIMB 8712).